Reading from the N-terminus, the 178-residue chain is Large ribosomal subunit protein bL25 (178 aa).

The protein belongs to the bacterial ribosomal protein bL25 family. CTC subfamily. As to quaternary structure, part of the 50S ribosomal subunit; part of the 5S rRNA/L5/L18/L25 subcomplex. Contacts the 5S rRNA. Binds to the 5S rRNA independently of L5 and L18.

In terms of biological role, this is one of the proteins that binds to the 5S RNA in the ribosome where it forms part of the central protuberance. This is Large ribosomal subunit protein bL25 from Campylobacter hominis (strain ATCC BAA-381 / DSM 21671 / CCUG 45161 / LMG 19568 / NCTC 13146 / CH001A).